Reading from the N-terminus, the 97-residue chain is uncharacterized protein (97 aa).

A disordered region spans residues 58-97 (SLLLPRTVQTGGTEREKPGPGQRKRGAHCSACKRSSTRPS).

This is an uncharacterized protein from Homo sapiens (Human).